We begin with the raw amino-acid sequence, 199 residues long: Small ribosomal subunit protein uS5 (199 aa).

A disordered region spans residues 1-28 (MARTPNTDRRQRGGDDQRNRSPRSDERD). The region spanning 31 to 94 (FLDKLVHINR…DQAKRTMIKV (64 aa)) is the S5 DRBM domain.

The protein belongs to the universal ribosomal protein uS5 family. Part of the 30S ribosomal subunit. Contacts proteins S4 and S8.

Functionally, with S4 and S12 plays an important role in translational accuracy. In terms of biological role, located at the back of the 30S subunit body where it stabilizes the conformation of the head with respect to the body. In Rhodospirillum rubrum (strain ATCC 11170 / ATH 1.1.1 / DSM 467 / LMG 4362 / NCIMB 8255 / S1), this protein is Small ribosomal subunit protein uS5.